We begin with the raw amino-acid sequence, 48 residues long: uncharacterized protein (48 aa).

The protein resides in the plastid. Its subcellular location is the cyanelle. This is an uncharacterized protein from Cyanophora paradoxa.